A 427-amino-acid chain; its full sequence is 3-phosphoshikimate 1-carboxyvinyltransferase (427 aa).

Lysine 21, serine 22, and arginine 26 together coordinate 3-phosphoshikimate. Position 21 (lysine 21) interacts with phosphoenolpyruvate. Phosphoenolpyruvate-binding residues include glycine 93 and arginine 121. Positions 166, 168, 314, and 341 each coordinate 3-phosphoshikimate. Glutamine 168 serves as a coordination point for phosphoenolpyruvate. Aspartate 314 functions as the Proton acceptor in the catalytic mechanism. 2 residues coordinate phosphoenolpyruvate: arginine 345 and arginine 387.

Belongs to the EPSP synthase family. In terms of assembly, monomer.

Its subcellular location is the cytoplasm. It carries out the reaction 3-phosphoshikimate + phosphoenolpyruvate = 5-O-(1-carboxyvinyl)-3-phosphoshikimate + phosphate. The protein operates within metabolic intermediate biosynthesis; chorismate biosynthesis; chorismate from D-erythrose 4-phosphate and phosphoenolpyruvate: step 6/7. Its function is as follows. Catalyzes the transfer of the enolpyruvyl moiety of phosphoenolpyruvate (PEP) to the 5-hydroxyl of shikimate-3-phosphate (S3P) to produce enolpyruvyl shikimate-3-phosphate and inorganic phosphate. In Alkaliphilus oremlandii (strain OhILAs) (Clostridium oremlandii (strain OhILAs)), this protein is 3-phosphoshikimate 1-carboxyvinyltransferase.